A 362-amino-acid polypeptide reads, in one-letter code: Phospho-N-acetylmuramoyl-pentapeptide-transferase (362 aa).

Helical transmembrane passes span 28–48 (GATV…IALL), 73–93 (TPTM…LLWA), 100–120 (VWIV…DDYL), 134–154 (VKLF…VLVS), 169–189 (TLLI…IVGS), 201–221 (GLAI…VYLV), 241–261 (LAVF…YNAP), 264–284 (MVFM…AIAV), 290–310 (LVLA…IVQV), and 339–359 (TVVV…LATL).

Belongs to the glycosyltransferase 4 family. MraY subfamily. Mg(2+) serves as cofactor.

It localises to the cell inner membrane. The catalysed reaction is UDP-N-acetyl-alpha-D-muramoyl-L-alanyl-gamma-D-glutamyl-meso-2,6-diaminopimeloyl-D-alanyl-D-alanine + di-trans,octa-cis-undecaprenyl phosphate = di-trans,octa-cis-undecaprenyl diphospho-N-acetyl-alpha-D-muramoyl-L-alanyl-D-glutamyl-meso-2,6-diaminopimeloyl-D-alanyl-D-alanine + UMP. The protein operates within cell wall biogenesis; peptidoglycan biosynthesis. Catalyzes the initial step of the lipid cycle reactions in the biosynthesis of the cell wall peptidoglycan: transfers peptidoglycan precursor phospho-MurNAc-pentapeptide from UDP-MurNAc-pentapeptide onto the lipid carrier undecaprenyl phosphate, yielding undecaprenyl-pyrophosphoryl-MurNAc-pentapeptide, known as lipid I. This is Phospho-N-acetylmuramoyl-pentapeptide-transferase from Parvibaculum lavamentivorans (strain DS-1 / DSM 13023 / NCIMB 13966).